The chain runs to 196 residues: Beta-crystallin A2 (196 aa).

Residues 1-11 (MTSEAMDTLGQ) form an N-terminal arm region. Beta/gamma crystallin 'Greek key' domains are found at residues 12–51 (YKITVWEEESFQGKRCEFLMECPSIMERGFRKIRSIKVES) and 52–98 (GPWV…RPVK). Residues 99–104 (CANHND) form a connecting peptide region. Beta/gamma crystallin 'Greek key' domains lie at 105 to 146 (SKAI…KVNA) and 147 to 195 (GAWV…RRIQ).

The protein belongs to the beta/gamma-crystallin family. As to quaternary structure, homo/heterodimer, or complexes of higher-order. The structure of beta-crystallin oligomers seems to be stabilized through interactions between the N-terminal arms.

Crystallins are the dominant structural components of the vertebrate eye lens. The protein is Beta-crystallin A2 (CRYBA2) of Gallus gallus (Chicken).